A 467-amino-acid polypeptide reads, in one-letter code: Sugar transporter ERD6-like 11 (467 aa).

Transmembrane regions (helical) follow at residues 26 to 46 (ITAC…SYGC), 75 to 95 (FLNV…VILG), 105 to 125 (FFCV…WLDL), 128 to 148 (ISLG…IAEI), 155 to 177 (GAFT…FFGT), 183 to 203 (VMAV…FFIP), 266 to 286 (LVVG…GITY), 301 to 321 (LGSM…LILV), 328 to 348 (PLLL…GVSF), 359 to 379 (LIPI…AFGI), 402 to 422 (IVAL…NFMF), and 428 to 448 (GTFY…WMLV).

Belongs to the major facilitator superfamily. Sugar transporter (TC 2.A.1.1) family.

The protein resides in the membrane. In terms of biological role, sugar transporter. This is Sugar transporter ERD6-like 11 from Arabidopsis thaliana (Mouse-ear cress).